We begin with the raw amino-acid sequence, 134 residues long: ATP synthase epsilon chain, chloroplastic (134 aa).

This sequence belongs to the ATPase epsilon chain family. In terms of assembly, F-type ATPases have 2 components, CF(1) - the catalytic core - and CF(0) - the membrane proton channel. CF(1) has five subunits: alpha(3), beta(3), gamma(1), delta(1), epsilon(1). CF(0) has three main subunits: a, b and c.

Its subcellular location is the plastid. The protein localises to the chloroplast thylakoid membrane. Its function is as follows. Produces ATP from ADP in the presence of a proton gradient across the membrane. The sequence is that of ATP synthase epsilon chain, chloroplastic from Gracilaria tenuistipitata var. liui (Red alga).